The sequence spans 62 residues: Fungus-induced protein 1 (62 aa).

The signal sequence occupies residues M1 to G22.

The polypeptide is Fungus-induced protein 1 (Caenorhabditis briggsae).